A 617-amino-acid polypeptide reads, in one-letter code: Proline--tRNA ligase (617 aa).

It belongs to the class-II aminoacyl-tRNA synthetase family. ProS type 1 subfamily. In terms of assembly, homodimer.

Its subcellular location is the cytoplasm. It carries out the reaction tRNA(Pro) + L-proline + ATP = L-prolyl-tRNA(Pro) + AMP + diphosphate. In terms of biological role, catalyzes the attachment of proline to tRNA(Pro) in a two-step reaction: proline is first activated by ATP to form Pro-AMP and then transferred to the acceptor end of tRNA(Pro). As ProRS can inadvertently accommodate and process non-cognate amino acids such as alanine and cysteine, to avoid such errors it has two additional distinct editing activities against alanine. One activity is designated as 'pretransfer' editing and involves the tRNA(Pro)-independent hydrolysis of activated Ala-AMP. The other activity is designated 'posttransfer' editing and involves deacylation of mischarged Ala-tRNA(Pro). The misacylated Cys-tRNA(Pro) is not edited by ProRS. This Streptococcus pneumoniae (strain CGSP14) protein is Proline--tRNA ligase.